Reading from the N-terminus, the 360-residue chain is Phospho-N-acetylmuramoyl-pentapeptide-transferase (360 aa).

10 helical membrane-spanning segments follow: residues 24–44 (RAVM…PWTI), 69–89 (GTPT…TLLW), 92–112 (WANP…ALGF), 133–153 (MVWQ…LAAN), 158–178 (ILIV…GFLV), 199–219 (GLAT…AYAS), 239–259 (VVIF…FNAY), 263–283 (VFMG…VAVI), 288–308 (FVLV…MLQV), and 337–357 (QVVV…LSTL).

The protein belongs to the glycosyltransferase 4 family. MraY subfamily. Requires Mg(2+) as cofactor.

It is found in the cell inner membrane. It catalyses the reaction UDP-N-acetyl-alpha-D-muramoyl-L-alanyl-gamma-D-glutamyl-meso-2,6-diaminopimeloyl-D-alanyl-D-alanine + di-trans,octa-cis-undecaprenyl phosphate = di-trans,octa-cis-undecaprenyl diphospho-N-acetyl-alpha-D-muramoyl-L-alanyl-D-glutamyl-meso-2,6-diaminopimeloyl-D-alanyl-D-alanine + UMP. It functions in the pathway cell wall biogenesis; peptidoglycan biosynthesis. Functionally, catalyzes the initial step of the lipid cycle reactions in the biosynthesis of the cell wall peptidoglycan: transfers peptidoglycan precursor phospho-MurNAc-pentapeptide from UDP-MurNAc-pentapeptide onto the lipid carrier undecaprenyl phosphate, yielding undecaprenyl-pyrophosphoryl-MurNAc-pentapeptide, known as lipid I. This chain is Phospho-N-acetylmuramoyl-pentapeptide-transferase, found in Neisseria meningitidis serogroup A / serotype 4A (strain DSM 15465 / Z2491).